The primary structure comprises 112 residues: Cornifelin homolog (112 aa).

This sequence belongs to the cornifelin family.

The sequence is that of Cornifelin homolog (cnfn) from Danio rerio (Zebrafish).